We begin with the raw amino-acid sequence, 178 residues long: Cytochrome b6-f complex iron-sulfur subunit (178 aa).

Residues 20–42 traverse the membrane as a helical segment; it reads LLTFGSVTGVALGALYPVVNYFI. The Rieske domain occupies 65–161; that stretch reads ATGWLSSHPE…VSVENDNVFV (97 aa). C107, H109, C125, and H128 together coordinate [2Fe-2S] cluster. C112 and C127 are oxidised to a cystine.

This sequence belongs to the Rieske iron-sulfur protein family. The 4 large subunits of the cytochrome b6-f complex are cytochrome b6, subunit IV (17 kDa polypeptide, PetD), cytochrome f and the Rieske protein, while the 4 small subunits are PetG, PetL, PetM and PetN. The complex functions as a dimer. [2Fe-2S] cluster is required as a cofactor.

The protein resides in the cellular thylakoid membrane. The catalysed reaction is 2 oxidized [plastocyanin] + a plastoquinol + 2 H(+)(in) = 2 reduced [plastocyanin] + a plastoquinone + 4 H(+)(out). Its function is as follows. Component of the cytochrome b6-f complex, which mediates electron transfer between photosystem II (PSII) and photosystem I (PSI), cyclic electron flow around PSI, and state transitions. The chain is Cytochrome b6-f complex iron-sulfur subunit from Parasynechococcus marenigrum (strain WH8102).